Consider the following 339-residue polypeptide: Transmembrane protein 120B (339 aa).

The stretch at 1–77 (MSGQLERCER…ASREEAELVQ (77 aa)) forms a coiled coil. 6 helical membrane-spanning segments follow: residues 102–124 (GLYL…AKFA), 132–152 (FKLY…FFLH), 159–179 (VFNF…SILI), 187–207 (GWWV…LTWP), 270–290 (FLLP…VTLF), and 302–322 (QVFV…LTTL).

It belongs to the TMEM120 family. As to quaternary structure, heterooligomer with TMEM120A.

The protein resides in the nucleus inner membrane. Its function is as follows. Necessary for efficient adipogenesis. Does not show ion channel activity. The protein is Transmembrane protein 120B (TMEM120B) of Bos taurus (Bovine).